The following is a 335-amino-acid chain: Phospho-N-acetylmuramoyl-pentapeptide-transferase (335 aa).

Transmembrane regions (helical) follow at residues 5 to 25, 50 to 70, 78 to 98, 114 to 133, 145 to 165, 177 to 197, 200 to 220, 236 to 256, 262 to 282, and 311 to 331; these read IFLA…LMIP, TPTM…LIMA, MVMV…DDFI, LIGQ…RYLG, IHLE…VGIT, LAAG…TLAA, GGGV…AAAV, VFMG…LAVL, ILLI…LQVF, and VVMV…IAYM.

The protein belongs to the glycosyltransferase 4 family. MraY subfamily. The cofactor is Mg(2+).

Its subcellular location is the cell membrane. It catalyses the reaction UDP-N-acetyl-alpha-D-muramoyl-L-alanyl-gamma-D-glutamyl-meso-2,6-diaminopimeloyl-D-alanyl-D-alanine + di-trans,octa-cis-undecaprenyl phosphate = di-trans,octa-cis-undecaprenyl diphospho-N-acetyl-alpha-D-muramoyl-L-alanyl-D-glutamyl-meso-2,6-diaminopimeloyl-D-alanyl-D-alanine + UMP. It participates in cell wall biogenesis; peptidoglycan biosynthesis. Functionally, catalyzes the initial step of the lipid cycle reactions in the biosynthesis of the cell wall peptidoglycan: transfers peptidoglycan precursor phospho-MurNAc-pentapeptide from UDP-MurNAc-pentapeptide onto the lipid carrier undecaprenyl phosphate, yielding undecaprenyl-pyrophosphoryl-MurNAc-pentapeptide, known as lipid I. This is Phospho-N-acetylmuramoyl-pentapeptide-transferase from Desulfitobacterium hafniense (strain DSM 10664 / DCB-2).